A 201-amino-acid chain; its full sequence is 7-methyl-GTP pyrophosphatase (201 aa).

The active-site Proton acceptor is D73.

This sequence belongs to the Maf family. YceF subfamily. A divalent metal cation serves as cofactor.

The protein localises to the cytoplasm. The enzyme catalyses N(7)-methyl-GTP + H2O = N(7)-methyl-GMP + diphosphate + H(+). Its function is as follows. Nucleoside triphosphate pyrophosphatase that hydrolyzes 7-methyl-GTP (m(7)GTP). May have a dual role in cell division arrest and in preventing the incorporation of modified nucleotides into cellular nucleic acids. The chain is 7-methyl-GTP pyrophosphatase from Thiobacillus denitrificans (strain ATCC 25259 / T1).